Consider the following 265-residue polypeptide: MRILVSNDDGIYSSGLWALVKRLKEVGEVVVVAPDREQSATGTQVTLRQPLRVQKTHPLIPGIEAYSVEGSPCDCVIMGLAKLITEPVDLVVSGINHGLNLGDDVLISGTVGAALQGYLRNIPSIAISIPVTAEEPENLDSAACITAEIARRIQSGHISKNSFLNINTPDLPLCRINELRVTPLAHKTHIETVEEGHDGRKRYFWLRRRQLSPADNNETDIWAVENGLISISALHERLFQQPPFMLEDTETAGILASARALQDII.

Residues D8, D9, S39, and N96 each contribute to the a divalent metal cation site.

Belongs to the SurE nucleotidase family. The cofactor is a divalent metal cation.

The protein localises to the cytoplasm. The enzyme catalyses a ribonucleoside 5'-phosphate + H2O = a ribonucleoside + phosphate. Functionally, nucleotidase that shows phosphatase activity on nucleoside 5'-monophosphates. This chain is 5'-nucleotidase SurE, found in Dehalococcoides mccartyi (strain ATCC BAA-2266 / KCTC 15142 / 195) (Dehalococcoides ethenogenes (strain 195)).